The sequence spans 430 residues: Sorting nexin-4 (430 aa).

Over residues 1–18 (MDSASADASVTGSGNAKG) the composition is skewed to polar residues. The disordered stretch occupies residues 1–22 (MDSASADASVTGSGNAKGSSAE). Residues 33 to 162 (LEILVSDPQK…IFLVGNEWDT (130 aa)) enclose the PX domain. 3 residues coordinate a 1,2-diacyl-sn-glycero-3-phospho-(1D-myo-inositol-3-phosphate): arginine 83, lysine 109, and arginine 128. Residues 351–414 (ASRRDKINKL…NNLADENIKF (64 aa)) adopt a coiled-coil conformation.

This sequence belongs to the sorting nexin family.

The protein localises to the cytoplasm. Its subcellular location is the cytosol. The protein resides in the preautophagosomal structure membrane. It localises to the endosome membrane. Sorting nexin, involved in the separation or division of vacuoles throughout the entire life cycle of the cells. Involved in retrieval of late-Golgi SNAREs from post-Golgi endosomes to the trans-Golgi network, for cytoplasm to vacuole transport (Cvt), and autophagy of large cargos including mitophagy, pexophagy and glycophagy. This is Sorting nexin-4 (SNX4) from Candida glabrata (strain ATCC 2001 / BCRC 20586 / JCM 3761 / NBRC 0622 / NRRL Y-65 / CBS 138) (Yeast).